Here is a 737-residue protein sequence, read N- to C-terminus: Fibronectin type III domain-containing protein 7 (737 aa).

Residues 1–25 form the signal peptide; it reads MAGRPEKCFSLIRFTLLCLKMVISS. 8 Fibronectin type-III domains span residues 28–115, 116–203, 204–288, 289–373, 374–459, 460–544, 545–633, and 631–715; these read APEI…TVLA, APVL…SPRA, PANI…TVAC, APGR…TAPC, CPND…TAPC, SPEI…TVPC, CPAG…CPLG, and PLGV…YSVT. An N-linked (GlcNAc...) asparagine glycan is attached at N230. The N-linked (GlcNAc...) asparagine glycan is linked to N433.

It localises to the secreted. In Mus musculus (Mouse), this protein is Fibronectin type III domain-containing protein 7 (Fndc7).